Here is a 31-residue protein sequence, read N- to C-terminus: Cyclotide cter-J (31 aa).

Positions 1–31 (GTVPCGESCVFIPCITGIAGCSCKNKVCYID) form a cross-link, cyclopeptide (Gly-Asp). Intrachain disulfides connect cysteine 5–cysteine 21, cysteine 9–cysteine 23, and cysteine 14–cysteine 28.

Post-translationally, contains 3 disulfide bonds. In terms of processing, this is a cyclic peptide.

Probably participates in a plant defense mechanism. The polypeptide is Cyclotide cter-J (Clitoria ternatea (Butterfly pea)).